Consider the following 57-residue polypeptide: Conotoxin Cal6.39 (57 aa).

The first 18 residues, 1 to 18 (MSGTTVLLLTCLFLVTMA), serve as a signal peptide directing secretion. Intrachain disulfides connect Cys22–Cys36, Cys29–Cys46, and Cys35–Cys52.

Expressed by the venom duct.

The protein resides in the secreted. In terms of biological role, probable neurotoxin. The chain is Conotoxin Cal6.39 from Californiconus californicus (California cone).